Consider the following 51-residue polypeptide: Large ribosomal subunit protein eL39 (51 aa).

Belongs to the eukaryotic ribosomal protein eL39 family.

This Pyrococcus abyssi (strain GE5 / Orsay) protein is Large ribosomal subunit protein eL39 (rpl39e).